The following is a 164-amino-acid chain: UPF0304 protein YfbU (164 aa).

It belongs to the UPF0304 family.

This is UPF0304 protein YfbU (yfbU) from Escherichia coli O6:H1 (strain CFT073 / ATCC 700928 / UPEC).